The sequence spans 108 residues: Guanine nucleotide-binding protein subunit gamma (108 aa).

Residue C104 is the site of S-palmitoyl cysteine attachment. At C105 the chain carries Cysteine methyl ester. Residue C105 is the site of S-farnesyl cysteine attachment. Positions 106–108 (VIS) are cleaved as a propeptide — removed in mature form.

This sequence belongs to the G protein gamma family. As to quaternary structure, g proteins are composed of 3 units, alpha, beta and gamma.

The protein localises to the membrane. This is Guanine nucleotide-binding protein subunit gamma from Yarrowia lipolytica (strain CLIB 122 / E 150) (Yeast).